The sequence spans 330 residues: Lipoyl synthase (330 aa).

[4Fe-4S] cluster-binding residues include C77, C82, C88, C103, C107, C110, and S317. The Radical SAM core domain occupies 89 to 306 (FNHGTATFMI…RSEAERMGFE (218 aa)).

It belongs to the radical SAM superfamily. Lipoyl synthase family. Requires [4Fe-4S] cluster as cofactor.

Its subcellular location is the cytoplasm. It catalyses the reaction [[Fe-S] cluster scaffold protein carrying a second [4Fe-4S](2+) cluster] + N(6)-octanoyl-L-lysyl-[protein] + 2 oxidized [2Fe-2S]-[ferredoxin] + 2 S-adenosyl-L-methionine + 4 H(+) = [[Fe-S] cluster scaffold protein] + N(6)-[(R)-dihydrolipoyl]-L-lysyl-[protein] + 4 Fe(3+) + 2 hydrogen sulfide + 2 5'-deoxyadenosine + 2 L-methionine + 2 reduced [2Fe-2S]-[ferredoxin]. It functions in the pathway protein modification; protein lipoylation via endogenous pathway; protein N(6)-(lipoyl)lysine from octanoyl-[acyl-carrier-protein]: step 2/2. Catalyzes the radical-mediated insertion of two sulfur atoms into the C-6 and C-8 positions of the octanoyl moiety bound to the lipoyl domains of lipoate-dependent enzymes, thereby converting the octanoylated domains into lipoylated derivatives. The chain is Lipoyl synthase from Actinobacillus pleuropneumoniae serotype 5b (strain L20).